A 495-amino-acid polypeptide reads, in one-letter code: Amorpha-4,11-diene 12-monooxygenase (495 aa).

Over 1–6 the chain is Cytoplasmic; that stretch reads MKSILK. The chain crosses the membrane as a helical; Signal-anchor for type II membrane protein span at residues 7-29; the sequence is AMALSLTTSIALATILLFVYKFA. At 30–495 the chain is on the lumenal side; the sequence is TRSKSTKKSL…KTELLLVPSF (466 aa). N-linked (GlcNAc...) asparagine glycosylation is found at Asn-176, Asn-261, Asn-267, Asn-386, and Asn-417. Heme is bound at residue Cys-439.

The protein belongs to the cytochrome P450 family. The cofactor is heme. In terms of tissue distribution, highly expressed both in apical and sub-apical cells of glandular secretory trichomes. Detected in flower buds, leaves and roots. Also present in non-glandular trichome cells.

It is found in the endoplasmic reticulum membrane. The catalysed reaction is (+)-amorpha-4,11-diene + 3 reduced [NADPH--hemoprotein reductase] + 3 O2 = (+)-artemisinate + 3 oxidized [NADPH--hemoprotein reductase] + 4 H2O + 4 H(+). Its pathway is sesquiterpene biosynthesis. Functionally, involved in the biosynthesis of the antimalarial endoperoxide artemisinin. Catalyzes three consecutive oxidations of amorpha-4,11-diene to produce artemisinic acid, with artemisinic alcohol and artemisinic aldehyde as intermediates products, but is unable to oxidize germacrene A. No activity with limonene, alpha-pinene, beta-pinene, pinocarveol, (-)-alloisolongifolene, caryophyllene, (-)-alpha-gurjunene, (+)-gamma-gurjunene, (+)-ledene, (+)-beta-selinene and (+)-valencene as substrates. The polypeptide is Amorpha-4,11-diene 12-monooxygenase (Artemisia annua (Sweet wormwood)).